Here is a 152-residue protein sequence, read N- to C-terminus: Lipoprotein signal peptidase (152 aa).

Transmembrane regions (helical) follow at residues 55 to 75 (NKMWFFYIITVVFVGFIVFYM) and 85 to 105 (LGISLGLILGGAIGNFIDRVF). Residues Asp-111 and Asp-129 contribute to the active site. A helical membrane pass occupies residues 124–144 (VFNIADSALCIGVVLIIIQTL).

Belongs to the peptidase A8 family.

It localises to the cell membrane. The catalysed reaction is Release of signal peptides from bacterial membrane prolipoproteins. Hydrolyzes -Xaa-Yaa-Zaa-|-(S,diacylglyceryl)Cys-, in which Xaa is hydrophobic (preferably Leu), and Yaa (Ala or Ser) and Zaa (Gly or Ala) have small, neutral side chains.. The protein operates within protein modification; lipoprotein biosynthesis (signal peptide cleavage). This protein specifically catalyzes the removal of signal peptides from prolipoproteins. This chain is Lipoprotein signal peptidase, found in Bacillus cytotoxicus (strain DSM 22905 / CIP 110041 / 391-98 / NVH 391-98).